Here is a 305-residue protein sequence, read N- to C-terminus: Olfactory receptor 4X1 (305 aa).

At 1 to 23 (MVATNNVTEIIFVGFSQNWSEQR) the chain is on the extracellular side. 2 N-linked (GlcNAc...) asparagine glycosylation sites follow: Asn6 and Asn18. A helical transmembrane segment spans residues 24–47 (VISVMFLLMYTAVVLGNGLIVVTI). Residues 48–55 (LASKVLTS) are Cytoplasmic-facing. The helical transmembrane segment at 56–77 (PMYFFLSYLSFVEICYCSVMAP) threads the bilayer. The Extracellular segment spans residues 78 to 98 (KLIFDSFIKRKVISLKGCLTQ). A disulfide bridge connects residues Cys95 and Cys187. A helical transmembrane segment spans residues 99-118 (MFSLHFFGGTEAFLLMVMAY). The Cytoplasmic portion of the chain corresponds to 119 to 137 (DRYVAICKPLHYMAIMNQR). A helical transmembrane segment spans residues 138 to 156 (MCGLLVRIAWGGGLLHSVG). Topologically, residues 157–193 (QTFLIFQLPFCGPNIMDHYFCDVHPVLELACADTFFI) are extracellular. The helical transmembrane segment at 194-217 (SLLIITNGGSISVVSFFVLMASYL) threads the bilayer. Over 218–233 (IILHFLRSHNLEGQHK) the chain is Cytoplasmic. A helical membrane pass occupies residues 234 to 256 (ALSTCASHVTVVDLFFIPCSLVY). Residues 257–267 (IRPCVTLPADK) are Extracellular-facing. A helical transmembrane segment spans residues 268-287 (IVAVFYTVVTPLLNPVIYSF). Residues 288-305 (RNAEVKNAMRRFIGGKVI) lie on the Cytoplasmic side of the membrane.

Belongs to the G-protein coupled receptor 1 family.

Its subcellular location is the cell membrane. Functionally, odorant receptor. This Homo sapiens (Human) protein is Olfactory receptor 4X1 (OR4X1).